Reading from the N-terminus, the 319-residue chain is tRNA uridine(34) hydroxylase (319 aa).

The Rhodanese domain occupies 133–231 (EDPDSVVIDT…YLEDVSSENS (99 aa)). The active-site Cysteine persulfide intermediate is Cys-191.

It belongs to the TrhO family.

It carries out the reaction uridine(34) in tRNA + AH2 + O2 = 5-hydroxyuridine(34) in tRNA + A + H2O. Catalyzes oxygen-dependent 5-hydroxyuridine (ho5U) modification at position 34 in tRNAs. The chain is tRNA uridine(34) hydroxylase from Prochlorococcus marinus (strain NATL1A).